The following is a 343-amino-acid chain: Allantoicase (343 aa).

This sequence belongs to the allantoicase family.

It catalyses the reaction allantoate + H2O = (S)-ureidoglycolate + urea. The protein operates within nitrogen metabolism; (S)-allantoin degradation; (S)-ureidoglycolate from allantoate (aminidohydrolase route): step 1/1. In terms of biological role, utilization of purines as secondary nitrogen sources, when primary sources are limiting. The polypeptide is Allantoicase (DAL2) (Saccharomyces cerevisiae (strain ATCC 204508 / S288c) (Baker's yeast)).